The chain runs to 717 residues: Cleavage stimulation factor subunit 3 (717 aa).

Residue Ser-2 is modified to N-acetylserine. HAT repeat units follow at residues 45-77, 79-110, 117-152, 163-196, 221-261, 271-303, 319-352, 354-387, and 458-494; these read QPID…AEIK, KNYD…YVRE, SYKE…FLKG, QRIT…YEEG, KEYE…WEKS, LITK…YLEQ, LFSD…YEES, MKYE…FARR, and NEDN…FESN. Residues 684–705 are disordered; the sequence is VKRPNEDSDEDEEKGAVVPPVH. A Phosphoserine modification is found at Ser-691.

Homodimer. The CSTF complex is composed of CSTF1 (50 kDa subunit), CSTF2 (64 kDa subunit) and CSTF3 (77 kDa subunit). CSTF3 directly interacts with CSTF1 and CSTF2. Interacts with FIP1L1.

It localises to the nucleus. In terms of biological role, one of the multiple factors required for polyadenylation and 3'-end cleavage of mammalian pre-mRNAs. This is Cleavage stimulation factor subunit 3 (CSTF3) from Homo sapiens (Human).